The primary structure comprises 330 residues: Ferredoxin--NADP reductase (330 aa).

Residues Glu35, Gln43, Tyr48, Val90, Phe123, Asp285, and Thr326 each contribute to the FAD site.

It belongs to the ferredoxin--NADP reductase type 2 family. As to quaternary structure, homodimer. FAD is required as a cofactor.

The catalysed reaction is 2 reduced [2Fe-2S]-[ferredoxin] + NADP(+) + H(+) = 2 oxidized [2Fe-2S]-[ferredoxin] + NADPH. This is Ferredoxin--NADP reductase from Streptococcus pyogenes serotype M28 (strain MGAS6180).